The chain runs to 988 residues: Ubiquitin carboxyl-terminal hydrolase 36 (988 aa).

Residues 16–55 are disordered; sequence PTLRTDNNGARKQAEHPNNQSHHNHPHPTSNPNELPKPKR. Residues 31 to 48 show a composition bias toward low complexity; that stretch reads HPNNQSHHNHPHPTSNPN. Residues 78–386 form the USP domain; it reads TGMINVGNTC…NAYIMFFELD (309 aa). The active-site Nucleophile is the cysteine 87. Histidine 345 serves as the catalytic Proton acceptor. Disordered stretches follow at residues 393-422, 483-782, and 868-988; these read PPAN…SPSP, ATSA…VTSN, and EQRQ…QQQT. Low complexity-rich tracts occupy residues 408–422 and 490–509; these read STTP…SPSP and NGNK…KSIN. Serine 419 and serine 421 each carry phosphoserine. A compositionally biased stretch (polar residues) spans 532-544; sequence TTAQLPSMPNMTE. Phosphothreonine occurs at positions 561 and 565. 2 positions are modified to phosphoserine: serine 575 and serine 577. Residues 592–601 are compositionally biased toward acidic residues; the sequence is EGEDFSESDQ. Residues 602 to 631 are compositionally biased toward polar residues; the sequence is ESGQTNGHSKTNGSLTNGSASSSVHVNNSK. Residues 632 to 649 show a composition bias toward basic and acidic residues; sequence QKTDAIDEIFKSLKKSAD. Position 650 is a phosphoserine (serine 650). Residues 650–659 show a composition bias toward acidic residues; it reads SEEDDDEEEP. The segment covering 669–679 has biased composition (low complexity); that stretch reads PQKQSQSQSKA. The segment covering 680 to 689 has biased composition (pro residues); that stretch reads PPSPKTPPSP. At serine 682 the chain carries Phosphoserine. A Phosphothreonine modification is found at threonine 685. Phosphoserine is present on serine 688. Acidic residues predominate over residues 707–717; the sequence is VDAIDDDDDAV. Threonine 728 bears the Phosphothreonine mark. Polar residues predominate over residues 735 to 747; that stretch reads NPFSSSKPSTDSP. At serine 746 the chain carries Phosphoserine. At threonine 749 the chain carries Phosphothreonine. Residues 762–782 are compositionally biased toward polar residues; sequence ALKSHQQPRVGNGYQSNVTSN. Low complexity-rich tracts occupy residues 892-903 and 930-943; these read SGSAKGNNASNS and RFHN…FQQR.

This sequence belongs to the peptidase C19 family. As to quaternary structure, interacts with atms/PAF1, but not with CycT.

It is found in the nucleus. It localises to the nucleolus. It carries out the reaction Thiol-dependent hydrolysis of ester, thioester, amide, peptide and isopeptide bonds formed by the C-terminal Gly of ubiquitin (a 76-residue protein attached to proteins as an intracellular targeting signal).. Functionally, required for maintaining multiple types of adult stem cells, including male and female germline, epithelial follicle cell and intestinal stem cells. May function as a transcriptional repressor by continually deubiquiting histone H2B at the promoters of genes critical for cellular differentiation, thereby preventing histone H3 'Lys-4' trimethylation (H3K4). Controls selective autophagy activation by ubiquitinated proteins. This Drosophila simulans (Fruit fly) protein is Ubiquitin carboxyl-terminal hydrolase 36 (Usp36).